The chain runs to 293 residues: N-acetylmannosamine kinase (293 aa).

Residues 5-12 (AIDIGGTK) and 133-140 (GVGGGLVI) contribute to the ATP site. Zn(2+) contacts are provided by H157, C167, C169, and C174.

The protein belongs to the ROK (NagC/XylR) family. NanK subfamily. As to quaternary structure, homodimer.

It catalyses the reaction an N-acyl-D-mannosamine + ATP = an N-acyl-D-mannosamine 6-phosphate + ADP + H(+). It participates in amino-sugar metabolism; N-acetylneuraminate degradation; D-fructose 6-phosphate from N-acetylneuraminate: step 2/5. Functionally, catalyzes the phosphorylation of N-acetylmannosamine (ManNAc) to ManNAc-6-P. The polypeptide is N-acetylmannosamine kinase (Vibrio vulnificus (strain CMCP6)).